The primary structure comprises 431 residues: Enolase (431 aa).

(2R)-2-phosphoglycerate is bound at residue Gln-168. Catalysis depends on Glu-210, which acts as the Proton donor. Mg(2+)-binding residues include Asp-247, Glu-291, and Asp-318. (2R)-2-phosphoglycerate-binding residues include Lys-343, Arg-372, Ser-373, and Lys-394. Catalysis depends on Lys-343, which acts as the Proton acceptor.

The protein belongs to the enolase family. In terms of assembly, component of the RNA degradosome, a multiprotein complex involved in RNA processing and mRNA degradation. Mg(2+) serves as cofactor.

It localises to the cytoplasm. It is found in the secreted. The protein resides in the cell surface. It catalyses the reaction (2R)-2-phosphoglycerate = phosphoenolpyruvate + H2O. It functions in the pathway carbohydrate degradation; glycolysis; pyruvate from D-glyceraldehyde 3-phosphate: step 4/5. Functionally, catalyzes the reversible conversion of 2-phosphoglycerate (2-PG) into phosphoenolpyruvate (PEP). It is essential for the degradation of carbohydrates via glycolysis. The sequence is that of Enolase from Acinetobacter baumannii (strain SDF).